A 78-amino-acid polypeptide reads, in one-letter code: Cytochrome c oxidase subunit 6b-3 (78 aa).

A CHCH domain is found at 22–65; it reads TRHCFTRYIEFHRCTTAKGEDANECERFAKYYRALCPGEWVDKW. A Cx9C motif motif is present at residues 25–35; that stretch reads CFTRYIEFHRC. 2 disulfides stabilise this stretch: C25/C57 and C35/C46. Positions 46–57 match the Cx10C motif motif; the sequence is CERFAKYYRALC.

This sequence belongs to the cytochrome c oxidase subunit 6B (TC 3.D.4.8) family. As to expression, expressed in the whole plant.

The protein localises to the mitochondrion. Functionally, this protein is one of the nuclear-coded polypeptide chains of cytochrome c oxidase, the terminal oxidase in mitochondrial electron transport. This protein may be one of the heme-binding subunits of the oxidase. In Arabidopsis thaliana (Mouse-ear cress), this protein is Cytochrome c oxidase subunit 6b-3 (COX6B-3).